Reading from the N-terminus, the 426-residue chain is Serine--tRNA ligase (426 aa).

Basic and acidic residues predominate over residues 1 to 15; sequence MIDVKDLSENPDKFR. The segment at 1–20 is disordered; that stretch reads MIDVKDLSENPDKFRASQRA. 228–230 lines the L-serine pocket; the sequence is TSE. ATP contacts are provided by residues 259 to 261 and Val275; that span reads RRE. Glu282 contacts L-serine. 346–349 lines the ATP pocket; it reads ELTS. L-serine is bound at residue Thr386.

This sequence belongs to the class-II aminoacyl-tRNA synthetase family. Type-1 seryl-tRNA synthetase subfamily. Homodimer. The tRNA molecule binds across the dimer.

The protein localises to the cytoplasm. It catalyses the reaction tRNA(Ser) + L-serine + ATP = L-seryl-tRNA(Ser) + AMP + diphosphate + H(+). It carries out the reaction tRNA(Sec) + L-serine + ATP = L-seryl-tRNA(Sec) + AMP + diphosphate + H(+). It functions in the pathway aminoacyl-tRNA biosynthesis; selenocysteinyl-tRNA(Sec) biosynthesis; L-seryl-tRNA(Sec) from L-serine and tRNA(Sec): step 1/1. Its function is as follows. Catalyzes the attachment of serine to tRNA(Ser). Is also able to aminoacylate tRNA(Sec) with serine, to form the misacylated tRNA L-seryl-tRNA(Sec), which will be further converted into selenocysteinyl-tRNA(Sec). This is Serine--tRNA ligase from Paenarthrobacter aurescens (strain TC1).